The sequence spans 269 residues: Type 4 prepilin-like proteins leader peptide-processing enzyme (269 aa).

7 helical membrane-spanning segments follow: residues 13–33 (MPVL…VVIW), 102–122 (YPLV…VWPE), 124–144 (GWAL…VIDL), 147–167 (QWLP…AAWA), 178–198 (VTGV…AGIV), 210–230 (LLFA…VALI), and 249–269 (LPFG…QALF).

The protein belongs to the peptidase A24 family.

It is found in the cell inner membrane. The enzyme catalyses Typically cleaves a -Gly-|-Phe- bond to release an N-terminal, basic peptide of 5-8 residues from type IV prepilin, and then N-methylates the new N-terminal amino group, the methyl donor being S-adenosyl-L-methionine.. Functionally, cleaves type-4 fimbrial leader sequence and methylates the N-terminal (generally Phe) residue. This chain is Type 4 prepilin-like proteins leader peptide-processing enzyme, found in Escherichia coli O78:H11 (strain H10407 / ETEC).